The chain runs to 304 residues: Plasmodesmata-located protein 3 (304 aa).

An N-terminal signal peptide occupies residues 1–26 (MGFYSLKQLLLLYIIIMALFSDLKLA). Residues 27–272 (KSSSPEYTNL…SSSSGTTGKT (246 aa)) lie on the Extracellular side of the membrane. Gnk2-homologous domains follow at residues 34-138 (TNLI…ISGF) and 143-242 (GMEL…FYPN). Intrachain disulfides connect cysteine 41/cysteine 116, cysteine 92/cysteine 101, cysteine 104/cysteine 129, cysteine 151/cysteine 220, cysteine 196/cysteine 205, and cysteine 208/cysteine 233. A helical transmembrane segment spans residues 273–293 (VAIIVGGTAGVGFLVICLLFV). The necessary and sufficient for plasmodesmal targeting stretch occupies residues 273–293 (VAIIVGGTAGVGFLVICLLFV). Residues 294 to 304 (KNLMKKKYDDY) lie on the Cytoplasmic side of the membrane.

The protein belongs to the cysteine-rich repeat secretory protein family. Plasmodesmata-located proteins (PDLD) subfamily. In terms of assembly, (Microbial infection) Interacts with Grapevine fanleaf virus (GFLV) 2B-MP. Highly expressed in inflorescence pedacel and shoot apex. Expressed in the outermost L1 layer of the shoot apical meristem and in the epidermis of bulging floral primordia. Within the L1, expression was restricted to the peripheral zone (at protein level).

The protein resides in the cell membrane. Its subcellular location is the cell junction. The protein localises to the plasmodesma. Functionally, modulates cell-to-cell trafficking. The sequence is that of Plasmodesmata-located protein 3 from Arabidopsis thaliana (Mouse-ear cress).